The primary structure comprises 314 residues: Ribosomal protein uL3 glutamine methyltransferase (314 aa).

This sequence belongs to the protein N5-glutamine methyltransferase family. PrmB subfamily.

The catalysed reaction is L-glutaminyl-[ribosomal protein uL3] + S-adenosyl-L-methionine = N(5)-methyl-L-glutaminyl-[ribosomal protein uL3] + S-adenosyl-L-homocysteine + H(+). Methylates large ribosomal subunit protein uL3 on a specific glutamine residue. The protein is Ribosomal protein uL3 glutamine methyltransferase of Vibrio cholerae serotype O1 (strain ATCC 39315 / El Tor Inaba N16961).